We begin with the raw amino-acid sequence, 546 residues long: Pectinesterase 1 (546 aa).

The N-terminal stretch at 1-39 (MANPQQPLLIKTHKQNPIISFKILSFVITLFVALFLVAP) is a signal peptide. Residues 40 to 229 (YQVEIKHSNL…RKLMESSGKD (190 aa)) constitute a propeptide that is removed on maturation. 2 residues coordinate substrate: threonine 308 and glutamine 338. A disulfide bridge connects residues cysteine 327 and cysteine 354. The active-site Proton donor is the aspartate 361. Catalysis depends on aspartate 382, which acts as the Nucleophile. A disulfide bridge links cysteine 395 with cysteine 429. Substrate-binding residues include arginine 450 and tryptophan 452.

In the N-terminal section; belongs to the PMEI family. It in the C-terminal section; belongs to the pectinesterase family.

Its subcellular location is the secreted. The protein localises to the cell wall. The enzyme catalyses [(1-&gt;4)-alpha-D-galacturonosyl methyl ester](n) + n H2O = [(1-&gt;4)-alpha-D-galacturonosyl](n) + n methanol + n H(+). The protein operates within glycan metabolism; pectin degradation; 2-dehydro-3-deoxy-D-gluconate from pectin: step 1/5. In terms of biological role, pectinesterase may play a role in cell wall metabolism during fruit growth and development prior to ripening and may be required for preparing cell walls for softening by polygalacturonase during fruit ripening. This is Pectinesterase 1 (PME1.9) from Solanum lycopersicum (Tomato).